An 860-amino-acid chain; its full sequence is MQEQYRPEEIESKVQLHWDEKRTFEVTEDESKEKYYCLSMLPYPSGRLHMGHVRNYTIGDVIARYQRMLGKNVLQPIGWDAFGLPAEGAAVKNNTAPAPWTYDNIAYMKNQLKMLGFGYDWSRELATCTPEYYRWEQKFFTELYKKGLVYKKTSAVNWCPNDQTVLANEQVIDGCCWRCDTKVERKEIPQWFIKITAYADELLNDLDKLDHWPDTVKTMQRNWIGRSEGVEITFNVNDYDNTLTVYTTRPDTFMGCTYLAVAAGHPLAQKAAENNPELAAFIDECRNTKVAEAEMATMEKKGVDTGFKAVHPLTGEEIPVWAANFVLMEYGTGAVMAVPGHDQRDYEFASKYGLNIKPVILAADGSEPDLSQQALTEKGVLFNSGEFNGLDHEAAFNAIADKLTAMGVGERKVNYRLRDWGVSRQRYWGAPIPMVTLEDGTVMPTPDDQLPVILPEDVVMDGITSPIKADPEWAKTTVNGMPALRETDTFDTFMESSWYYARYTCPQYKEGMLDSEAANYWLPVDIYIGGIEHAIMHLLYFRFFHKLMRDAGMVNSDEPAKQLLCQGMVLADAFYYVGENGERNWVSPVDAIVERDEKGRIVKAKDAAGHELVYTGMSKMSKSKNNGIDPQVMVERYGADTVRLFMMFASPADMTLEWQESGVEGANRFLKRVWKLVYEHTAKGDVAALNVDALTEDQKALRRDVHKTIAKVTDDIGRRQTFNTAIAAIMELMNKLAKAPTDGEQDRALMQEALLAVVRMLNPFTPHICFTLWQELKGEGDIDNAPWPVADEKAMVEDSTLVVVQVNGKVRAKITVPVDATEEQVRERAGQEHLVAKYLDGVTVRKVIYVPGKLLNLVVG.

The short motif at 42–52 is the 'HIGH' region element; the sequence is PYPSGRLHMGH. A 'KMSKS' region motif is present at residues 619–623; sequence KMSKS. Residue Lys622 coordinates ATP.

It belongs to the class-I aminoacyl-tRNA synthetase family.

The protein localises to the cytoplasm. It carries out the reaction tRNA(Leu) + L-leucine + ATP = L-leucyl-tRNA(Leu) + AMP + diphosphate. The chain is Leucine--tRNA ligase from Escherichia coli (strain SE11).